A 120-amino-acid polypeptide reads, in one-letter code: Large ribosomal subunit protein uL18 (120 aa).

The span at 1–10 shows a compositional bias: basic and acidic residues; that stretch reads MKRTRTESVQ. A disordered region spans residues 1-24; sequence MKRTRTESVQRRHSRIRRKVEGTP.

Belongs to the universal ribosomal protein uL18 family. In terms of assembly, part of the 50S ribosomal subunit; part of the 5S rRNA/L5/L18/L25 subcomplex. Contacts the 5S and 23S rRNAs.

Functionally, this is one of the proteins that bind and probably mediate the attachment of the 5S RNA into the large ribosomal subunit, where it forms part of the central protuberance. The polypeptide is Large ribosomal subunit protein uL18 (Gloeothece citriformis (strain PCC 7424) (Cyanothece sp. (strain PCC 7424))).